The sequence spans 347 residues: Mitochondrial glycine transporter (347 aa).

3 Solcar repeats span residues 18–102 (SKPT…LRTA), 138–222 (LSHT…SKRS), and 247–331 (STAS…LIMW). A run of 6 helical transmembrane segments spans residues 24-49 (FAAG…TRVQ), 77-103 (GTLP…RTAV), 144-169 (LITG…VRYE), 197-220 (GFGA…EQSK), 251-277 (INFI…KTRV), and 306-324 (GLGL…AWTV).

Belongs to the mitochondrial carrier (TC 2.A.29) family. SLC25A38 subfamily.

Its subcellular location is the mitochondrion inner membrane. It catalyses the reaction glycine(in) = glycine(out). Mitochondrial glycine transporter that imports glycine into the mitochondrial matrix. Plays an important role in providing glycine for the first enzymatic step in heme biosynthesis, the condensation of glycine with succinyl-CoA to produce 5-aminolevulinate (ALA) in the mitochondrial matrix. This is Mitochondrial glycine transporter from Coccidioides immitis (strain RS) (Valley fever fungus).